The sequence spans 162 residues: UPF0262 protein Acry_0160 (162 aa).

Belongs to the UPF0262 family.

The polypeptide is UPF0262 protein Acry_0160 (Acidiphilium cryptum (strain JF-5)).